The following is a 314-amino-acid chain: GTPase-interacting component 1 (314 aa).

3 disordered regions span residues 112-156, 199-221, and 241-261; these read SRRH…KHDV, TMDS…QLDS, and LGDS…SFSG. In terms of domain architecture, CRIB spans 126 to 139; sequence ISTPFDFHHISHAN. A compositionally biased stretch (basic and acidic residues) spans 140 to 156; that stretch reads GKREDNPLESHEEKHDV. Positions 208 to 221 are enriched in polar residues; that stretch reads ETNNTPNGNKQLDS. Over residues 251–260 the composition is skewed to low complexity; that stretch reads PSSPSVSSFS.

Belongs to the BORG/CEP family. As to quaternary structure, interacts with GTP-bound CDC42.

It is found in the bud neck. The protein localises to the bud tip. It localises to the cytoplasm. Its subcellular location is the cell cortex. The protein resides in the cytoskeleton. In terms of biological role, required for cell size and shape control, bud site selection, bud emergence, actin cytoskeletal organization, mitotic spindle orientation/positioning, and mating projection formation in response to mating pheromone. The sequence is that of GTPase-interacting component 1 (GIC1) from Saccharomyces cerevisiae (strain ATCC 204508 / S288c) (Baker's yeast).